Consider the following 450-residue polypeptide: MPSPLGPPCLPVMDPETTLEEPETARLRFRGFCYQEVAGPREALARLRELCCQWLQPEAHSKEQMLEMLVLEQFLGTLPPEIQAWVRGQRPGSPEEAAALVEGLQHDPGQLLGWITAHVLKQEVLPAAQKTEEPLGSPHPSGTVESPGEGPQDTRIEGSVQLSCSVKEEPNVDGQEVAPSSPPLAAQSPEGNHGHQEPASTSFHPPRIQEEWGLLDRSQKELYWDAMLEKYGTVVSLGLPPHQPEAQAQSELGMLLTGTGVCRSLRSGNESEGPPGCPEAQPPQGPGPAAWEGLSGAATPAPTVRPGTPPVPTQPTPAETRLEPAATPRKPYTCEQCGRGFDWKSVFVIHHRTHTSGPGVQSPGLATGESTEKPPQGEVAFPHHPRRSLTGPRSYPCEECGCSFSWKSQLVIHRKSHTGQRRHFCSDCGRAFDWKSQLVIHRKGHRPEVP.

One can recognise an SCAN box domain in the interval 26-108 (RLRFRGFCYQ…ALVEGLQHDP (83 aa)). Lys-130 is covalently cross-linked (Glycyl lysine isopeptide (Lys-Gly) (interchain with G-Cter in SUMO2)). 2 disordered regions span residues 130 to 155 (KTEE…QDTR) and 168 to 205 (EEPN…SFHP). At Ser-137 the chain carries Phosphoserine. In terms of domain architecture, KRAB spans 208 to 254 (IQEEWGLLDRSQKELYWDAMLEKYGTVVSLGLPPHQPEAQAQSELGM). The residue at position 218 (Ser-218) is a Phosphoserine. Disordered regions lie at residues 263–331 (RSLR…PRKP) and 354–389 (HTSG…RRSL). Residues 275–286 (PGCPEAQPPQGP) show a composition bias toward pro residues. Over residues 287–306 (GPAAWEGLSGAATPAPTVRP) the composition is skewed to low complexity. Thr-308 is modified (phosphothreonine). Lys-330 participates in a covalent cross-link: Glycyl lysine isopeptide (Lys-Gly) (interchain with G-Cter in SUMO2). C2H2-type zinc fingers lie at residues 332–359 (YTCE…SGPG), 395–422 (YPCE…GQRR), and 423–450 (HFCS…PEVP).

The protein belongs to the krueppel C2H2-type zinc-finger protein family.

It is found in the nucleus. Its function is as follows. May be involved in transcriptional regulation. This is Zinc finger protein 446 (ZNF446) from Homo sapiens (Human).